We begin with the raw amino-acid sequence, 444 residues long: 3-phosphoshikimate 1-carboxyvinyltransferase (444 aa).

Residues lysine 29, serine 30, and arginine 34 each contribute to the 3-phosphoshikimate site. Lysine 29 serves as a coordination point for phosphoenolpyruvate. Positions 102 and 131 each coordinate phosphoenolpyruvate. Residues serine 176, glutamine 178, aspartate 326, and lysine 353 each contribute to the 3-phosphoshikimate site. Residue glutamine 178 coordinates phosphoenolpyruvate. Aspartate 326 serves as the catalytic Proton acceptor. Phosphoenolpyruvate is bound by residues arginine 357 and arginine 399.

Belongs to the EPSP synthase family. As to quaternary structure, monomer.

The protein resides in the cytoplasm. It catalyses the reaction 3-phosphoshikimate + phosphoenolpyruvate = 5-O-(1-carboxyvinyl)-3-phosphoshikimate + phosphate. The protein operates within metabolic intermediate biosynthesis; chorismate biosynthesis; chorismate from D-erythrose 4-phosphate and phosphoenolpyruvate: step 6/7. Functionally, catalyzes the transfer of the enolpyruvyl moiety of phosphoenolpyruvate (PEP) to the 5-hydroxyl of shikimate-3-phosphate (S3P) to produce enolpyruvyl shikimate-3-phosphate and inorganic phosphate. The chain is 3-phosphoshikimate 1-carboxyvinyltransferase from Synechococcus sp. (strain JA-3-3Ab) (Cyanobacteria bacterium Yellowstone A-Prime).